A 552-amino-acid polypeptide reads, in one-letter code: Ferry endosomal RAB5 effector complex subunit 3 (552 aa).

Positions 383–403 (LKESLDSGNQNGGNDDKTKNA) are disordered.

Component of the FERRY complex composed of five subunits, TBCK, PPP1R21, FERRY3, CRYZL1 and GATD1 with a ratio of 1:2:1:2:4, respectively.

Its subcellular location is the cytoplasm. It is found in the early endosome. Functionally, component of the FERRY complex (Five-subunit Endosomal Rab5 and RNA/ribosome intermediary). The FERRY complex directly interacts with mRNAs and RAB5A, and functions as a RAB5A effector involved in the localization and the distribution of specific mRNAs most likely by mediating their endosomal transport. The complex recruits mRNAs and ribosomes to early endosomes through direct mRNA-interaction. Plays a role in mast cell degranulation. This is Ferry endosomal RAB5 effector complex subunit 3 from Homo sapiens (Human).